The primary structure comprises 149 residues: Cyanate hydratase (149 aa).

Residues Arg90, Glu93, and Ser116 contribute to the active site.

The protein belongs to the cyanase family.

The catalysed reaction is cyanate + hydrogencarbonate + 3 H(+) = NH4(+) + 2 CO2. Its function is as follows. Catalyzes the reaction of cyanate with bicarbonate to produce ammonia and carbon dioxide. The sequence is that of Cyanate hydratase from Aquifex aeolicus (strain VF5).